A 235-amino-acid polypeptide reads, in one-letter code: Sugar fermentation stimulation protein homolog (235 aa).

This sequence belongs to the SfsA family.

This is Sugar fermentation stimulation protein homolog from Allorhizobium ampelinum (strain ATCC BAA-846 / DSM 112012 / S4) (Agrobacterium vitis (strain S4)).